Reading from the N-terminus, the 470-residue chain is MNPNQKIITIGSISLGLVVFNVLLHVVSIIVTVLVLGKGGNNGICNETVVREYNETVRIEKVTQWHNTNVVEYVPYWNGGTYMNNTEAICDAKGFAPFSKDNGIRIGSRGHIFVIREPFVSCSPIECRTFFLTQGSLLNDKHSNGTVKDRSPFRTLMSVEVGQSPNVYQARFEAVAWSATACHDGKKWMTVGVTGPDSKAVAVIHYGGVPTDVVNSWAGDILRTQESSCTCIQGDCYWVMTDGPANRQAQYRIYKANQGRIIGQTDISFNGGHIEECSCYPNDGKVECVCRDGWTGTNRPVLVISPDLSYRVGYLCAGIPSDTPRGEDTQFTGSCTSPMGNQGYGVKGFGFRQGTDVWMGRTISRTSRSGFEILRIKNGWTQTSKEQIRKQVVVDNLNWSGYSGSFTLPVELSGKDCLVPCFWVEMIRGKPEEKTIWTSSSSIVMCGVDYEVADWSWHDGAILPFDIDKM.

Residues 1–14 (MNPNQKIITIGSIS) are Intravirion-facing. The interval 11-32 (GSISLGLVVFNVLLHVVSIIVT) is involved in apical transport and lipid raft association. Residues 15–35 (LGLVVFNVLLHVVSIIVTVLV) traverse the membrane as a helical segment. Positions 32–86 (TVLVLGKGGNNGICNETVVREYNETVRIEKVTQWHNTNVVEYVPYWNGGTYMNNT) are hypervariable stalk region. Topologically, residues 36–470 (LGKGGNNGIC…AILPFDIDKM (435 aa)) are virion surface. 3 N-linked (GlcNAc...) asparagine; by host glycosylation sites follow: N46, N54, and N84. The tract at residues 89 to 470 (ICDAKGFAPF…AILPFDIDKM (382 aa)) is head of neuraminidase. 8 disulfide bridges follow: C90–C417, C122–C127, C182–C229, C231–C236, C277–C290, C279–C288, C316–C335, and C421–C446. Residue R116 coordinates substrate. The N-linked (GlcNAc...) asparagine; by host glycan is linked to N144. The Proton donor/acceptor role is filled by D149. Residue R150 coordinates substrate. Residue 275-276 (EE) coordinates substrate. Residue R291 coordinates substrate. 3 residues coordinate Ca(2+): D292, G296, and D322. R368 contributes to the substrate binding site. N398 is a glycosylation site (N-linked (GlcNAc...) asparagine; by host). Y402 (nucleophile) is an active-site residue.

It belongs to the glycosyl hydrolase 34 family. Homotetramer. Requires Ca(2+) as cofactor. Post-translationally, N-glycosylated.

It is found in the virion membrane. The protein resides in the host apical cell membrane. It carries out the reaction Hydrolysis of alpha-(2-&gt;3)-, alpha-(2-&gt;6)-, alpha-(2-&gt;8)- glycosidic linkages of terminal sialic acid residues in oligosaccharides, glycoproteins, glycolipids, colominic acid and synthetic substrates.. With respect to regulation, inhibited by the neuraminidase inhibitors zanamivir (Relenza) and oseltamivir (Tamiflu). These drugs interfere with the release of progeny virus from infected cells and are effective against all influenza strains. Resistance to neuraminidase inhibitors is quite rare. Its function is as follows. Catalyzes the removal of terminal sialic acid residues from viral and cellular glycoconjugates. Cleaves off the terminal sialic acids on the glycosylated HA during virus budding to facilitate virus release. Additionally helps virus spread through the circulation by further removing sialic acids from the cell surface. These cleavages prevent self-aggregation and ensure the efficient spread of the progeny virus from cell to cell. Otherwise, infection would be limited to one round of replication. Described as a receptor-destroying enzyme because it cleaves a terminal sialic acid from the cellular receptors. May facilitate viral invasion of the upper airways by cleaving the sialic acid moieties on the mucin of the airway epithelial cells. Likely to plays a role in the budding process through its association with lipid rafts during intracellular transport. May additionally display a raft-association independent effect on budding. Plays a role in the determination of host range restriction on replication and virulence. Sialidase activity in late endosome/lysosome traffic seems to enhance virus replication. The protein is Neuraminidase of Influenza A virus (strain A/Duck/Ukraine/1/1963 H3N8).